Reading from the N-terminus, the 338-residue chain is tRNA N6-adenosine threonylcarbamoyltransferase (338 aa).

Fe cation contacts are provided by His-114 and His-118. Residues 136–140, Asp-169, Gly-182, Asp-186, and Asn-275 each bind substrate; that span reads LVSGG. Asp-301 is a Fe cation binding site.

The protein belongs to the KAE1 / TsaD family. The cofactor is Fe(2+).

It localises to the cytoplasm. It carries out the reaction L-threonylcarbamoyladenylate + adenosine(37) in tRNA = N(6)-L-threonylcarbamoyladenosine(37) in tRNA + AMP + H(+). Required for the formation of a threonylcarbamoyl group on adenosine at position 37 (t(6)A37) in tRNAs that read codons beginning with adenine. Is involved in the transfer of the threonylcarbamoyl moiety of threonylcarbamoyl-AMP (TC-AMP) to the N6 group of A37, together with TsaE and TsaB. TsaD likely plays a direct catalytic role in this reaction. The polypeptide is tRNA N6-adenosine threonylcarbamoyltransferase (Streptococcus equi subsp. equi (strain 4047)).